Here is a 21-residue protein sequence, read N- to C-terminus: Outer membrane protein A (21 aa).

Residues 6–16 traverse the membrane as a beta stranded segment; it reads TWYTGAKLGWS.

Belongs to the outer membrane OOP (TC 1.B.6) superfamily. OmpA family. In terms of assembly, monomer and homodimer.

Its subcellular location is the cell outer membrane. With TolR probably plays a role in maintaining the position of the peptidoglycan cell wall in the periplasm. Acts as a porin with low permeability that allows slow penetration of small solutes; an internal gate slows down solute passage. The polypeptide is Outer membrane protein A (Actinobacillus lignieresii).